Reading from the N-terminus, the 358-residue chain is Peptide chain release factor 1 (358 aa).

Glutamine 233 carries the post-translational modification N5-methylglutamine.

This sequence belongs to the prokaryotic/mitochondrial release factor family. In terms of processing, methylated by PrmC. Methylation increases the termination efficiency of RF1.

The protein localises to the cytoplasm. Functionally, peptide chain release factor 1 directs the termination of translation in response to the peptide chain termination codons UAG and UAA. The sequence is that of Peptide chain release factor 1 from Clostridium botulinum (strain 657 / Type Ba4).